Reading from the N-terminus, the 157-residue chain is Large ribosomal subunit protein bL20 (157 aa).

Positions 121 to 157 are disordered; it reads TSAPAVSAEAAPKAKAAKKPAAKKAAAKKPVAEEAAK. The segment covering 122 to 134 has biased composition (low complexity); that stretch reads SAPAVSAEAAPKA. Basic residues predominate over residues 135-147; that stretch reads KAAKKPAAKKAAA.

It belongs to the bacterial ribosomal protein bL20 family.

Functionally, binds directly to 23S ribosomal RNA and is necessary for the in vitro assembly process of the 50S ribosomal subunit. It is not involved in the protein synthesizing functions of that subunit. In Arthrobacter sp. (strain FB24), this protein is Large ribosomal subunit protein bL20 (rplT).